The sequence spans 126 residues: Large-conductance mechanosensitive channel (126 aa).

The next 2 membrane-spanning stretches (helical) occupy residues 8–28 (FAMRGNVIDLAVAVVLGAAFT) and 70–90 (IQQIVSFFLIAIALFLIVKVI).

The protein belongs to the MscL family. As to quaternary structure, homopentamer.

The protein localises to the cell membrane. Its function is as follows. Channel that opens in response to stretch forces in the membrane lipid bilayer. May participate in the regulation of osmotic pressure changes within the cell. This Exiguobacterium sp. (strain ATCC BAA-1283 / AT1b) protein is Large-conductance mechanosensitive channel.